Consider the following 244-residue polypeptide: Small ribosomal subunit protein uS3 (244 aa).

Residues 39-107 enclose the KH type-2 domain; it reads VREMLRKKLA…PAHINVTEVR (69 aa). Residues 213–244 form a disordered region; that stretch reads VGQEKQDDSPRNDRNDRGDRGDRPSRPAREAR. Over residues 216-244 the composition is skewed to basic and acidic residues; the sequence is EKQDDSPRNDRNDRGDRGDRPSRPAREAR.

It belongs to the universal ribosomal protein uS3 family. As to quaternary structure, part of the 30S ribosomal subunit. Forms a tight complex with proteins S10 and S14.

In terms of biological role, binds the lower part of the 30S subunit head. Binds mRNA in the 70S ribosome, positioning it for translation. This Xanthomonas campestris pv. campestris (strain 8004) protein is Small ribosomal subunit protein uS3.